The chain runs to 179 residues: Inner membrane-spanning protein YciB (179 aa).

A run of 5 helical transmembrane segments spans residues 22–42, 50–70, 76–96, 121–141, and 149–169; these read IYAA…YSWV, MALI…FFHN, WKVT…QWVM, LAWA…AFWL, and FKVF…GIYI.

Belongs to the YciB family.

The protein resides in the cell inner membrane. In terms of biological role, plays a role in cell envelope biogenesis, maintenance of cell envelope integrity and membrane homeostasis. This is Inner membrane-spanning protein YciB from Shigella boydii serotype 18 (strain CDC 3083-94 / BS512).